Here is a 399-residue protein sequence, read N- to C-terminus: Multi-drug resistance efflux pump PmrA (399 aa).

Transmembrane regions (helical) follow at residues 12-34 (IAWFGNFLTGASISLVVPFMPIF), 49-71 (AGLAISVSAISAALFSPIWGILA), 84-106 (GLAMTITMGGLAFVPNIYWLIFL), 140-162 (LSTGVVAGTLTGPFIGGFIAELF), 167-186 (VFLLVGSFLFLAAILTICFI), 217-239 (LFLTSFVIQFSAQSIGPILALYV), 248-270 (LLFVSGLIVSSMGFSSMMSAGVM), 306-328 (LGLYRFLFGLGTGALIPGVNALL), 340-362 (VFAFNQVFFYLGGVVGPMAGSAV), and 366-388 (FGYHAVFYATSLCVAFSCLFNLI).

It belongs to the major facilitator superfamily. TCR/Tet family.

It is found in the cell membrane. Its function is as follows. Efflux pump for various substrates. This chain is Multi-drug resistance efflux pump PmrA (pmrA), found in Streptococcus pneumoniae serotype 4 (strain ATCC BAA-334 / TIGR4).